The sequence spans 718 residues: Heat shock 70 kDa protein 7, chloroplastic (718 aa).

A chloroplast-targeting transit peptide spans 1–92 (MASSAAQIHI…IDLGTTNSAV (92 aa)). Positions 668–678 (QIGQSLYNQPQ) are enriched in polar residues. Residues 668–718 (QIGQSLYNQPQPGGADSPPGGEASSSSDTSSSAKGGDNGGDVIDADFTDSN) are disordered.

This sequence belongs to the heat shock protein 70 (TC 1.A.33) family. DnaK subfamily.

The protein localises to the plastid. It localises to the chloroplast stroma. In terms of biological role, acts redundantly with HSP70-6 in the thermotolerance of germinating seeds. Plays an important role in the protein precursor import into chloroplasts. In cooperation with other chaperones, Hsp70s are key components that facilitate folding of de novo synthesized proteins, assist translocation of precursor proteins into organelles, and are responsible for degradation of damaged protein under stress conditions. The chain is Heat shock 70 kDa protein 7, chloroplastic (HSP70-7) from Arabidopsis thaliana (Mouse-ear cress).